A 62-amino-acid polypeptide reads, in one-letter code: Large ribosomal subunit protein uL30 (62 aa).

Belongs to the universal ribosomal protein uL30 family. As to quaternary structure, part of the 50S ribosomal subunit.

The sequence is that of Large ribosomal subunit protein uL30 from Beutenbergia cavernae (strain ATCC BAA-8 / DSM 12333 / CCUG 43141 / JCM 11478 / NBRC 16432 / NCIMB 13614 / HKI 0122).